Here is a 396-residue protein sequence, read N- to C-terminus: Methionine import ATP-binding protein MetN 2 (396 aa).

The ABC transporter domain maps to 41 to 280; that stretch reads VSFELVGKVF…PRHGATRALL (240 aa). 77–84 serves as a coordination point for ATP; sequence GRSGAGKS.

Belongs to the ABC transporter superfamily. Methionine importer (TC 3.A.1.24) family. In terms of assembly, the complex is composed of two ATP-binding proteins (MetN), two transmembrane proteins (MetI) and a solute-binding protein (MetQ).

The protein resides in the cell inner membrane. The enzyme catalyses L-methionine(out) + ATP + H2O = L-methionine(in) + ADP + phosphate + H(+). It carries out the reaction D-methionine(out) + ATP + H2O = D-methionine(in) + ADP + phosphate + H(+). Part of the ABC transporter complex MetNIQ involved in methionine import. Responsible for energy coupling to the transport system. This Burkholderia pseudomallei (strain K96243) protein is Methionine import ATP-binding protein MetN 2.